Reading from the N-terminus, the 218-residue chain is Thiopurine S-methyltransferase (218 aa).

Residues Trp-10, Leu-45, Glu-66, and Arg-123 each contribute to the S-adenosyl-L-methionine site.

It belongs to the class I-like SAM-binding methyltransferase superfamily. TPMT family.

Its subcellular location is the cytoplasm. The catalysed reaction is S-adenosyl-L-methionine + a thiopurine = S-adenosyl-L-homocysteine + a thiopurine S-methylether.. The chain is Thiopurine S-methyltransferase from Pseudomonas aeruginosa (strain UCBPP-PA14).